The primary structure comprises 542 residues: Chaperonin GroEL (542 aa).

ATP contacts are provided by residues 29-32 (TLGP), 86-90 (DGTTT), Gly413, and Asp492.

The protein belongs to the chaperonin (HSP60) family. Forms a cylinder of 14 subunits composed of two heptameric rings stacked back-to-back. Interacts with the co-chaperonin GroES.

Its subcellular location is the cytoplasm. The catalysed reaction is ATP + H2O + a folded polypeptide = ADP + phosphate + an unfolded polypeptide.. Together with its co-chaperonin GroES, plays an essential role in assisting protein folding. The GroEL-GroES system forms a nano-cage that allows encapsulation of the non-native substrate proteins and provides a physical environment optimized to promote and accelerate protein folding. In Nocardia asteroides, this protein is Chaperonin GroEL.